The chain runs to 264 residues: S-adenosylmethionine decarboxylase proenzyme (264 aa).

The Schiff-base intermediate with substrate; via pyruvic acid role is filled by S113. A Pyruvic acid (Ser); by autocatalysis modification is found at S113. H118 acts as the Proton acceptor; for processing activity in catalysis. The active-site Proton donor; for catalytic activity is C141.

The protein belongs to the prokaryotic AdoMetDC family. Type 2 subfamily. Heterooctamer of four alpha and four beta chains arranged as a tetramer of alpha/beta heterodimers. It depends on pyruvate as a cofactor. In terms of processing, is synthesized initially as an inactive proenzyme. Formation of the active enzyme involves a self-maturation process in which the active site pyruvoyl group is generated from an internal serine residue via an autocatalytic post-translational modification. Two non-identical subunits are generated from the proenzyme in this reaction, and the pyruvate is formed at the N-terminus of the alpha chain, which is derived from the carboxyl end of the proenzyme. The post-translation cleavage follows an unusual pathway, termed non-hydrolytic serinolysis, in which the side chain hydroxyl group of the serine supplies its oxygen atom to form the C-terminus of the beta chain, while the remainder of the serine residue undergoes an oxidative deamination to produce ammonia and the pyruvoyl group blocking the N-terminus of the alpha chain.

It catalyses the reaction S-adenosyl-L-methionine + H(+) = S-adenosyl 3-(methylsulfanyl)propylamine + CO2. Its pathway is amine and polyamine biosynthesis; S-adenosylmethioninamine biosynthesis; S-adenosylmethioninamine from S-adenosyl-L-methionine: step 1/1. In terms of biological role, catalyzes the decarboxylation of S-adenosylmethionine to S-adenosylmethioninamine (dcAdoMet), the propylamine donor required for the synthesis of the polyamines spermine and spermidine from the diamine putrescine. The sequence is that of S-adenosylmethionine decarboxylase proenzyme from Pseudomonas syringae pv. syringae (strain B728a).